A 261-amino-acid polypeptide reads, in one-letter code: Polyamine aminopropyltransferase (261 aa).

A PABS domain is found at 1–219 (MHPFRRRVRP…AVMAFRQSPS (219 aa)). Residues D96 and 124 to 125 (DG) contribute to the S-methyl-5'-thioadenosine site. D142 (proton acceptor) is an active-site residue.

The protein belongs to the spermidine/spermine synthase family. As to quaternary structure, homodimer or homotetramer.

It localises to the cytoplasm. The catalysed reaction is S-adenosyl 3-(methylsulfanyl)propylamine + putrescine = S-methyl-5'-thioadenosine + spermidine + H(+). Its pathway is amine and polyamine biosynthesis; spermidine biosynthesis; spermidine from putrescine: step 1/1. Functionally, catalyzes the irreversible transfer of a propylamine group from the amino donor S-adenosylmethioninamine (decarboxy-AdoMet) to putrescine (1,4-diaminobutane) to yield spermidine. The protein is Polyamine aminopropyltransferase of Chromobacterium violaceum (strain ATCC 12472 / DSM 30191 / JCM 1249 / CCUG 213 / NBRC 12614 / NCIMB 9131 / NCTC 9757 / MK).